Here is a 309-residue protein sequence, read N- to C-terminus: Beta-lactamase (309 aa).

Positions M1–A28 are cleaved as a signal peptide. The active-site Acyl-ester intermediate is the S92. E188 acts as the Proton acceptor in catalysis. Residue K254 to G256 participates in substrate binding.

It belongs to the class-A beta-lactamase family.

The catalysed reaction is a beta-lactam + H2O = a substituted beta-amino acid. In terms of biological role, this protein is a beta-lactamase with a substrate specificity for penicillins. This chain is Beta-lactamase (bla), found in Bacillus thuringiensis.